Consider the following 390-residue polypeptide: Phosphopentomutase (390 aa).

Residues Asp-11, Asp-283, His-288, Asp-324, His-325, and His-336 each contribute to the Mn(2+) site.

This sequence belongs to the phosphopentomutase family. Requires Mn(2+) as cofactor.

Its subcellular location is the cytoplasm. It catalyses the reaction 2-deoxy-alpha-D-ribose 1-phosphate = 2-deoxy-D-ribose 5-phosphate. The enzyme catalyses alpha-D-ribose 1-phosphate = D-ribose 5-phosphate. Its pathway is carbohydrate degradation; 2-deoxy-D-ribose 1-phosphate degradation; D-glyceraldehyde 3-phosphate and acetaldehyde from 2-deoxy-alpha-D-ribose 1-phosphate: step 1/2. Functionally, isomerase that catalyzes the conversion of deoxy-ribose 1-phosphate (dRib-1-P) and ribose 1-phosphate (Rib-1-P) to deoxy-ribose 5-phosphate (dRib-5-P) and ribose 5-phosphate (Rib-5-P), respectively. This chain is Phosphopentomutase, found in Alkaliphilus oremlandii (strain OhILAs) (Clostridium oremlandii (strain OhILAs)).